The chain runs to 343 residues: MAKTYKIAVIPGDGIGKEVTPWAQKALEKAAEGVADFEYENFDLGAERYLRDGAILPEDEEERIKANDAILLGAVGDPRIKAGILERGLLLKLRFDLDQYVNLRPSKLYKGVTSPLANPGDIDFVVVREGTEGLYCGAGGAVRRNTPQEVATEVSINTAYGVERVVRYAFKLAMKRKKHVTLVHKKNVLVNAGDMWQRIVDKVGEEYPEVTHDYQHIDAATIFLVSDPSRFDVILTDNLFGDILTDEAGSVVGGVGYSASGCINASDEFPSMFEPIHGSAPDIAGQNKANPTAAILSAAMLLEHLGFDDAAKKIHTAVEADIEELGSTVRSTDQVGKDILARM.

Substrate-binding residues include Arg-94, Arg-104, Arg-128, and Asp-218. The Mg(2+) site is built by Asp-218, Asp-242, and Asp-246. Residue 278–290 participates in NAD(+) binding; the sequence is GSAPDIAGQNKAN.

Belongs to the isocitrate and isopropylmalate dehydrogenases family. LeuB type 2 subfamily. As to quaternary structure, homodimer. Mg(2+) serves as cofactor. Requires Mn(2+) as cofactor.

It localises to the cytoplasm. It catalyses the reaction (2R,3S)-3-isopropylmalate + NAD(+) = 4-methyl-2-oxopentanoate + CO2 + NADH. It participates in amino-acid biosynthesis; L-leucine biosynthesis; L-leucine from 3-methyl-2-oxobutanoate: step 3/4. In terms of biological role, catalyzes the oxidation of 3-carboxy-2-hydroxy-4-methylpentanoate (3-isopropylmalate) to 3-carboxy-4-methyl-2-oxopentanoate. The product decarboxylates to 4-methyl-2 oxopentanoate. This Bifidobacterium longum (strain DJO10A) protein is 3-isopropylmalate dehydrogenase.